The chain runs to 448 residues: Probable glycine dehydrogenase (decarboxylating) subunit 1 (448 aa).

The protein belongs to the GcvP family. N-terminal subunit subfamily. In terms of assembly, the glycine cleavage system is composed of four proteins: P, T, L and H. In this organism, the P 'protein' is a heterodimer of two subunits.

It carries out the reaction N(6)-[(R)-lipoyl]-L-lysyl-[glycine-cleavage complex H protein] + glycine + H(+) = N(6)-[(R)-S(8)-aminomethyldihydrolipoyl]-L-lysyl-[glycine-cleavage complex H protein] + CO2. The glycine cleavage system catalyzes the degradation of glycine. The P protein binds the alpha-amino group of glycine through its pyridoxal phosphate cofactor; CO(2) is released and the remaining methylamine moiety is then transferred to the lipoamide cofactor of the H protein. The polypeptide is Probable glycine dehydrogenase (decarboxylating) subunit 1 (Exiguobacterium sibiricum (strain DSM 17290 / CCUG 55495 / CIP 109462 / JCM 13490 / 255-15)).